The sequence spans 60 residues: Cytotoxin 10 (60 aa).

Cystine bridges form between Cys-3-Cys-21, Cys-14-Cys-38, Cys-42-Cys-53, and Cys-54-Cys-59.

This sequence belongs to the three-finger toxin family. Short-chain subfamily. Type IA cytotoxin sub-subfamily. Monomer in solution; Homodimer and oligomer in the presence of negatively charged lipids forming a pore with a size ranging between 20 and 30 Angstroms. As to expression, expressed by the venom gland.

It localises to the secreted. It is found in the target cell membrane. Shows cytolytic activity on many different cells by forming pore in lipid membranes. In vivo, increases heart rate or kills the animal by cardiac arrest. In addition, it binds to heparin with high affinity, interacts with Kv channel-interacting protein 1 (KCNIP1) in a calcium-independent manner, and binds to integrin alpha-V/beta-3 (ITGAV/ITGB3) with moderate affinity. Has hemolytic activity towards human erythrocytes (EC(50)=0.162 uM) and cytolytic activity towards various cell lines. The protein is Cytotoxin 10 of Naja naja (Indian cobra).